The primary structure comprises 192 residues: MVHRQLPETVLLLLVSSTIFSLEPKRIPFQLWMNRESLQLLKPLPSSSVQQCLAHRKNFLLPQQPVSPHQYQEGQVLAVVHEILQQIFTLLQTHGTMGIWEENHIEKVLAALHRQLEYVESLGGLNAAQKSGGSSAQNLRLQIKAYFRRIHDYLENQRYSSCAWIIVQTEIHRCMFFVFRFTTWLSRQDPDP.

A signal peptide spans 1–21 (MVHRQLPETVLLLLVSSTIFS). Cys-52 and Cys-162 are oxidised to a cystine.

The protein belongs to the alpha/beta interferon family. In terms of tissue distribution, expressed at very high levels in uterus and, at much lower levels, in ovary and cervix. Very low levels, if any, in other organs. In the endometrium, expressed in the luminal and glandular epithelial cells (at protein level).

It localises to the secreted. Type I interferon required for maintaining basal levels of IFN-regulated genes, including 2'-5'-oligoadenylate synthetase, IRF7 and ISG15, in the female reproductive tract. Directly mediates protection against viral, including HSV-2, and bacterial, including Chlamydia muridarum, genital infections. In Mus musculus (Mouse), this protein is Interferon epsilon (Ifne).